Consider the following 152-residue polypeptide: Putative pseudoazurin (152 aa).

A signal peptide spans 1–23 (MPLKFGLIVATAALIASAASLMA). One can recognise a Plastocyanin-like domain in the interval 28 to 116 (VQMLNKGTDG…MGMVALIQVG (89 aa)). 4 residues coordinate Cu cation: His-63, Cys-101, His-104, and Met-109.

Cu cation serves as cofactor.

The protein resides in the periplasm. In terms of biological role, this soluble electron transfer copper protein is required for the inactivation of copper-containing nitrite reductase in the presence of oxygen. The sequence is that of Putative pseudoazurin (azu) from Rhizobium leguminosarum bv. viciae.